Reading from the N-terminus, the 258-residue chain is Thiazole synthase (258 aa).

The active-site Schiff-base intermediate with DXP is K100. 1-deoxy-D-xylulose 5-phosphate-binding positions include G161, 187 to 188 (AG), and 209 to 210 (NT).

This sequence belongs to the ThiG family. As to quaternary structure, homotetramer. Forms heterodimers with either ThiH or ThiS.

The protein localises to the cytoplasm. The catalysed reaction is [ThiS sulfur-carrier protein]-C-terminal-Gly-aminoethanethioate + 2-iminoacetate + 1-deoxy-D-xylulose 5-phosphate = [ThiS sulfur-carrier protein]-C-terminal Gly-Gly + 2-[(2R,5Z)-2-carboxy-4-methylthiazol-5(2H)-ylidene]ethyl phosphate + 2 H2O + H(+). Its pathway is cofactor biosynthesis; thiamine diphosphate biosynthesis. Functionally, catalyzes the rearrangement of 1-deoxy-D-xylulose 5-phosphate (DXP) to produce the thiazole phosphate moiety of thiamine. Sulfur is provided by the thiocarboxylate moiety of the carrier protein ThiS. In vitro, sulfur can be provided by H(2)S. This chain is Thiazole synthase, found in Campylobacter jejuni subsp. jejuni serotype O:6 (strain 81116 / NCTC 11828).